Reading from the N-terminus, the 36-residue chain is F420-dependent NADP reductase (36 aa).

NADP(+) is bound at residue 9-12 (TGNI).

It belongs to the F420-dependent NADP reductase family. As to quaternary structure, homotetramer.

It catalyses the reaction reduced coenzyme F420-(gamma-L-Glu)(n) + NADP(+) = oxidized coenzyme F420-(gamma-L-Glu)(n) + NADPH + 2 H(+). Its function is as follows. Catalyzes the reduction of NADP(+) with F420H(2) via hydride transfer, and the reverse reaction, i.e. the reduction of F420 with NADPH. In M.organophilum, an alcohol-fermenting methanogen containing an NADP-dependent alcohol dehydrogenase, is probably involved in the regeneration of F420H(2) required for CO(2) reduction to methane. Thus, during growth on alcohol and CO(2), the F420-dependent NADP reductase probably has the function of coupling the NADP-dependent oxidation of the alcohol to the aldehyde with the F420-dependent reduction of CO(2) to methane. The chain is F420-dependent NADP reductase (fno) from Methanogenium organophilum.